The chain runs to 341 residues: Probable cytosolic iron-sulfur protein assembly protein Ciao1 (341 aa).

WD repeat units follow at residues 12–51 (GHAG…RWVA), 58–97 (GHTR…FECN), 102–141 (GHDN…DQED), 151–190 (GHTQ…SEWE), 197–236 (SHSS…NALG), 255–294 (YHSR…DRNE), and 305–341 (AHSQ…VDAD).

It belongs to the WD repeat CIA1 family.

Its function is as follows. Essential component of the cytosolic iron-sulfur (Fe/S) protein assembly machinery. Required for the maturation of extramitochondrial Fe/S proteins. The protein is Probable cytosolic iron-sulfur protein assembly protein Ciao1 of Anopheles gambiae (African malaria mosquito).